A 181-amino-acid polypeptide reads, in one-letter code: Inorganic pyrophosphatase (181 aa).

Substrate-binding residues include lysine 16, arginine 30, and tyrosine 42. Aspartate 52, aspartate 57, and aspartate 89 together coordinate Mg(2+). Residue tyrosine 126 participates in substrate binding.

The protein belongs to the PPase family. In terms of assembly, homohexamer. It depends on Mg(2+) as a cofactor.

Its subcellular location is the cytoplasm. It carries out the reaction diphosphate + H2O = 2 phosphate + H(+). Catalyzes the hydrolysis of inorganic pyrophosphate (PPi) forming two phosphate ions. The protein is Inorganic pyrophosphatase of Malacoplasma penetrans (strain HF-2) (Mycoplasma penetrans).